A 335-amino-acid polypeptide reads, in one-letter code: Cathepsin B (335 aa).

An N-terminal signal peptide occupies residues 1–17; it reads MWRLLATLSCLLVLTSA. Positions 18–79 are cleaved as a propeptide — activation peptide; sequence RSSLYFPPLS…QRDAFAADVV (62 aa). Intrachain disulfides connect cysteine 93-cysteine 122, cysteine 105-cysteine 150, cysteine 141-cysteine 207, cysteine 142-cysteine 146, cysteine 179-cysteine 211, and cysteine 187-cysteine 198. Cysteine 108 is an active-site residue. N-linked (GlcNAc...) asparagine glycosylation occurs at asparagine 192. Lysine 220 carries the post-translational modification N6-acetyllysine. Cysteine 227 and cysteine 331 form a disulfide bridge. Catalysis depends on residues histidine 278 and asparagine 298. The propeptide occupies 333–335; that stretch reads HQY.

The protein belongs to the peptidase C1 family. Dimer of a heavy chain and a light chain cross-linked by a disulfide bond. Interacts with SRPX2. Directly interacts with SHKBP1. As to expression, expressed in myoblasts, the myotube, fibroblasts and fetal muscle (at protein level). Expressed in the spleen (at protein level).

The protein localises to the lysosome. The protein resides in the melanosome. It is found in the secreted. Its subcellular location is the extracellular space. It localises to the apical cell membrane. It carries out the reaction Hydrolysis of proteins with broad specificity for peptide bonds. Preferentially cleaves -Arg-Arg-|-Xaa bonds in small molecule substrates (thus differing from cathepsin L). In addition to being an endopeptidase, shows peptidyl-dipeptidase activity, liberating C-terminal dipeptides.. In terms of biological role, thiol protease which is believed to participate in intracellular degradation and turnover of proteins. Cleaves matrix extracellular phosphoglycoprotein MEPE. Involved in the solubilization of cross-linked TG/thyroglobulin in the thyroid follicle lumen. Has also been implicated in tumor invasion and metastasis. This chain is Cathepsin B (CTSB), found in Bos taurus (Bovine).